The primary structure comprises 469 residues: ABHD16B (469 aa).

Positions 174-298 (VICCEGNAGF…GLVVRTVREH (125 aa)) constitute an AB hydrolase-1 domain. Residues S247, D322, and H418 each act as charge relay system in the active site.

Belongs to the AB hydrolase superfamily. ABHD16 family.

It carries out the reaction a 1,2-diacyl-sn-glycero-3-phospho-L-serine + H2O = a 2-acyl-sn-glycero-3-phospho-L-serine + a fatty acid + H(+). It catalyses the reaction a 1-acylglycerol + H2O = glycerol + a fatty acid + H(+). The enzyme catalyses 1-(9Z-octadecenoyl)-glycerol + H2O = glycerol + (9Z)-octadecenoate + H(+). Hydrolyzes the sn-1 position of glycerophospholipids with high specificity towards phosphatidylserine (PS), PS-PLA1 enzyme. Also hydrolyzes the acyl chain of glycerolipids with a preference for the monoacylglycerol (MAG) 1-acylglycerol, MAG lipase. Plays a regulatory role in cellular lipid homeostasis by modulating genes involved in neutral lipid degradation and in phospholipid synthesis and composition. This is ABHD16B from Homo sapiens (Human).